A 406-amino-acid chain; its full sequence is Tryptophan synthase beta chain (406 aa).

K99 carries the post-translational modification N6-(pyridoxal phosphate)lysine.

The protein belongs to the TrpB family. As to quaternary structure, tetramer of two alpha and two beta chains. The cofactor is pyridoxal 5'-phosphate.

The enzyme catalyses (1S,2R)-1-C-(indol-3-yl)glycerol 3-phosphate + L-serine = D-glyceraldehyde 3-phosphate + L-tryptophan + H2O. Its pathway is amino-acid biosynthesis; L-tryptophan biosynthesis; L-tryptophan from chorismate: step 5/5. Functionally, the beta subunit is responsible for the synthesis of L-tryptophan from indole and L-serine. The protein is Tryptophan synthase beta chain of Brucella melitensis biotype 2 (strain ATCC 23457).